Consider the following 368-residue polypeptide: Anhydro-N-acetylmuramic acid kinase (368 aa).

13–20 (GTSLDGVD) contacts ATP.

The protein belongs to the anhydro-N-acetylmuramic acid kinase family.

It carries out the reaction 1,6-anhydro-N-acetyl-beta-muramate + ATP + H2O = N-acetyl-D-muramate 6-phosphate + ADP + H(+). It participates in amino-sugar metabolism; 1,6-anhydro-N-acetylmuramate degradation. The protein operates within cell wall biogenesis; peptidoglycan recycling. Catalyzes the specific phosphorylation of 1,6-anhydro-N-acetylmuramic acid (anhMurNAc) with the simultaneous cleavage of the 1,6-anhydro ring, generating MurNAc-6-P. Is required for the utilization of anhMurNAc either imported from the medium or derived from its own cell wall murein, and thus plays a role in cell wall recycling. The sequence is that of Anhydro-N-acetylmuramic acid kinase from Hahella chejuensis (strain KCTC 2396).